The following is a 551-amino-acid chain: Arginine--tRNA ligase (551 aa).

Positions 125–135 (ANPTGPLHIGH) match the 'HIGH' region motif.

It belongs to the class-I aminoacyl-tRNA synthetase family. In terms of assembly, monomer.

The protein resides in the cytoplasm. It carries out the reaction tRNA(Arg) + L-arginine + ATP = L-arginyl-tRNA(Arg) + AMP + diphosphate. The polypeptide is Arginine--tRNA ligase (Nitratidesulfovibrio vulgaris (strain ATCC 29579 / DSM 644 / CCUG 34227 / NCIMB 8303 / VKM B-1760 / Hildenborough) (Desulfovibrio vulgaris)).